The following is a 244-amino-acid chain: tRNA uridine(34) hydroxylase (244 aa).

In terms of domain architecture, Rhodanese spans 129 to 219 (QGRELVMLDT…GILKYFEETD (91 aa)). C183 functions as the Cysteine persulfide intermediate in the catalytic mechanism.

Belongs to the TrhO family.

The catalysed reaction is uridine(34) in tRNA + AH2 + O2 = 5-hydroxyuridine(34) in tRNA + A + H2O. Its function is as follows. Catalyzes oxygen-dependent 5-hydroxyuridine (ho5U) modification at position 34 in tRNAs. This Bordetella bronchiseptica (strain ATCC BAA-588 / NCTC 13252 / RB50) (Alcaligenes bronchisepticus) protein is tRNA uridine(34) hydroxylase.